A 2063-amino-acid polypeptide reads, in one-letter code: Nuclear receptor coactivator 6 (2063 aa).

The segment at 1–928 (MVLDDLPNLE…PPRKKKNSQQ (928 aa)) is TBP/GTF2A-binding region. Residues 1–1057 (MVLDDLPNLE…LPVSQNVHPP (1057 aa)) are CREBBP-binding region. Residues 1 to 1310 (MVLDDLPNLE…QTHKLDSVVV (1310 aa)) are NCOA1-binding region. The residue at position 95 (R95) is an Asymmetric dimethylarginine. Disordered stretches follow at residues 184 to 251 (IPPG…VNRQ), 281 to 549 (QQQQ…APQL), and 789 to 811 (RPPGPSPHMAQQHGDPATTANND). A compositionally biased stretch (low complexity) spans 281 to 300 (QQQQQLQARPPQQHQQQQPQ). 5 stretches are compositionally biased toward polar residues: residues 353 to 368 (MQQQLQARPSLATVQT), 379 to 406 (GSQQASQAHTNFPQMSNPGQFTAPQMKS), 417 to 453 (PLQQPHLTNKSPASSPSSFQQGSPASSPTVNQTQQQM), 462 to 502 (PLPQ…QGPQ), and 522 to 549 (GQANPNFMQGQVPSTTATTPGNSGAPQL). Positions 773 to 927 (VNNSPSQVMG…KPPRKKKNSQ (155 aa)) are NCOA6IP-binding region. S884 bears the Phosphoserine; by MAPK; in vitro mark. Positions 887-891 (LVNLL) match the LXXLL motif 1 motif. 3 disordered regions span residues 899–1278 (HFGV…LNPT), 1310–1353 (VNSG…KAPK), and 1448–1474 (EVKMVVPEDQSKKDGQPSDPNKLPSVE). The segment covering 903–912 (NNKQNNTNAN) has biased composition (low complexity). The span at 913–925 (KPKKKKPPRKKKN) shows a compositional bias: basic residues. Positions 982–992 (PLQQMPPQLMQ) are enriched in low complexity. Residues 995 to 1020 (APPPQPPQQQPQPQLPQQQQPPPPSQ) show a composition bias toward pro residues. The segment covering 1021 to 1041 (PQSQQQQQQQQQMMMMLMMQQ) has biased composition (low complexity). 2 positions are modified to asymmetric dimethylarginine: R1047 and R1058. Residues 1063-1075 (PDSQRMPMQQSGS) show a composition bias toward polar residues. R1096 bears the Asymmetric dimethylarginine mark. 3 stretches are compositionally biased toward polar residues: residues 1104 to 1125 (PLGSNSRKMVYQESPQNPSSSP), 1173 to 1191 (LSATQGATPQQPPVNSLPS), and 1202 to 1214 (APTQTSRPKTPNR). Residues 1219–1232 (PYYPQTPNNRPPST) show a composition bias toward pro residues. Residues 1310–1320 (VNSGKQSNSGA) are compositionally biased toward polar residues. Low complexity predominate over residues 1322-1345 (KRASPSNSRRSSPGSSRKTTPSPG). The short motif at 1491–1495 (LSQLL) is the LXXLL motif 2 element. Positions 1641–2063 (SEGQSAAQSN…AVQSKRRKSK (423 aa)) are EP300/CRSP3-binding region. The tract at residues 1738–1820 (ATPVQLPSPP…VSSSKGKGKV (83 aa)) is disordered. Residues 1750-1763 (SSPVVPSHPPVQQV) are compositionally biased toward low complexity. Positions 1773 to 1798 (PQVNTSADQNTLPSSQSTTMVSPLLT) are enriched in polar residues. Over residues 1799-1815 (NSPGSSGNRRSPVSSSK) the composition is skewed to low complexity. N6-acetyllysine is present on residues K1819 and K1822. Disordered regions lie at residues 1837–1908 (GSLE…LPGG) and 1995–2063 (IVSG…RKSK). Positions 2002 to 2011 (EPKEIVEKSK) are enriched in basic and acidic residues. S2018 is modified (phosphoserine).

As to quaternary structure, monomer and homodimer. Interacts with RBM39. Interacts in vitro with the basal transcription factors GTF2A and TBP, suggesting an autonomous transactivation function. Interacts with NCOA1, CRSP3, RBM14, the histone acetyltransferases EP300 and CREBBP, and with the methyltransferases NCOA6IP and PRMT2/HRMT1L1. Component of the MLL2/3 complex (also named ASCOM complex), at least composed of KMT2D/MLL2 or KMT2C/MLL3, ASH2L, RBBP5, WDR5, NCOA6, DPY30, KDM6A, PAXIP1/PTIP, PAGR1 and alpha- and beta-tubulin. Interacts with ZNF335; may enhance ligand-dependent transcriptional activation by nuclear hormone receptors. Post-translationally, phosphorylated by PRKDC. Phosphorylation on Ser-884 leads to a strong decrease in binding to ESR1 and ESR2. As to expression, ubiquitous. Highly expressed in brain, prostate, testis and ovary; weakly expressed in lung, thymus and small intestine.

It localises to the nucleus. Its function is as follows. Nuclear receptor coactivator that directly binds nuclear receptors and stimulates the transcriptional activities in a hormone-dependent fashion. Coactivates expression in an agonist- and AF2-dependent manner. Involved in the coactivation of different nuclear receptors, such as for steroids (GR and ERs), retinoids (RARs and RXRs), thyroid hormone (TRs), vitamin D3 (VDR) and prostanoids (PPARs). Probably functions as a general coactivator, rather than just a nuclear receptor coactivator. May also be involved in the coactivation of the NF-kappa-B pathway. May coactivate expression via a remodeling of chromatin and its interaction with histone acetyltransferase proteins. This is Nuclear receptor coactivator 6 (NCOA6) from Homo sapiens (Human).